We begin with the raw amino-acid sequence, 190 residues long: Apolipoprotein M (190 aa).

The not cleaved signal peptide spans 1–22 (MFHQVWAALLSLYGLLFNSMNQ). 3 disulfide bridges follow: Cys23-Cys169, Cys95-Cys185, and Cys130-Cys159. The tetradecanoate site is built by Glu138 and Arg145.

This sequence belongs to the calycin superfamily. Lipocalin family. Highly divergent. As to quaternary structure, interacts with LRP2; LRP2 mediates APOM renal uptake and subsequent lysosomal degradation. In terms of tissue distribution, expressed by the liver; secreted in plasma.

The protein localises to the secreted. Probably involved in lipid transport. Can bind sphingosine-1-phosphate, myristic acid, palmitic acid and stearic acid, retinol, all-trans-retinoic acid and 9-cis-retinoic acid. This chain is Apolipoprotein M (Apom), found in Mus musculus (Mouse).